The primary structure comprises 894 residues: E3 ubiquitin-protein ligase SH3RF1 (894 aa).

Residues 12–53 (CPVCLERLDASAKVLPCQHTFCKRCLLGIVGSRNELRCPECR) form an RING-type zinc finger. SH3 domains follow at residues 134-193 (PQLP…IIKP) and 196-259 (QPPP…FNSA). Residues 274 to 323 (VDTAECPSATAAQSSSASKHSDTKKNTRKRHSFTSLTMANKSSQASQNRH) form a disordered region. Positions 281–291 (SATAAQSSSAS) are enriched in low complexity. Residues 293–363 (HSDTKKNTRK…APSQVHISTT (71 aa)) form an interaction with RAC1 region. Phosphoserine is present on Ser305. The segment covering 306 to 322 (FTSLTMANKSSQASQNR) has biased composition (polar residues). Positions 448-551 (HLRPQTRPSV…STAGGPAQKP (104 aa)) are interaction with AKT2. One can recognise an SH3 3 domain in the interval 453–514 (TRPSVYVAIY…PGNYVAPVTR (62 aa)). Disordered stretches follow at residues 526 to 556 (MSTA…GNGV) and 682 to 751 (LETE…PTLD). Ser540 carries the phosphoserine modification. Residues 700–713 (SPESAASACGNSSA) are compositionally biased toward polar residues. The segment covering 715-726 (KPDKDSKKEKKG) has biased composition (basic and acidic residues). A Phosphoserine modification is found at Ser743. The 60-residue stretch at 835–894 (VVCERHRVVVSYPPQSEAELELKEGDIVFVHKKREDGWFKGTLQRNGKTGLFPGSFVENI) folds into the SH3 4 domain.

This sequence belongs to the SH3RF family. As to quaternary structure, interacts with HERP1. Interacts with RAC1; in a GTP-dependent manner. Interacts with MAP3K10/MLK2 and MAP3K11/MLK3. Interacts with MAPK8IP; this interaction leads to the PJAC complex (POSH-JIP or SH3RF1/MAPK8IP apoptotic complex) with a 1:1 ratio. Interacts with SIAH1. Probably part of a signaling complex that may contain SH3RF1, MAPK8IP, DLK1, MAP2K4/MKK4, MAP2K7/MKK7, MAPK8/JNK1, MAPK9/JNK2, AKT1 and AKT2. Found in a complex with RAC2, MAP3K7/TAK1, MAP2K7/MKK7, MAPK8IP1/JIP1, MAPK8/JNK1 and MAPK9/JNK2. Found in a complex with RAC1, MAP3K11/MLK3, MAP2K7/MKK7, MAPK8IP1/JIP1 and MAPK8/JNK1. Interacts with SH3RF2. Post-translationally, phosphorylated at Ser-305 by AKT1 and AKT2. When phosphorylated, it has reduced ability to bind Rac. In terms of processing, autoubiquitinated. Ubiquitinated by SH3RF2, leading to proteasome-mediated degradation.

It localises to the cytoplasm. Its subcellular location is the perinuclear region. It is found in the cell projection. The protein localises to the lamellipodium. The protein resides in the golgi apparatus. It localises to the trans-Golgi network. It carries out the reaction S-ubiquitinyl-[E2 ubiquitin-conjugating enzyme]-L-cysteine + [acceptor protein]-L-lysine = [E2 ubiquitin-conjugating enzyme]-L-cysteine + N(6)-ubiquitinyl-[acceptor protein]-L-lysine.. It functions in the pathway protein modification; protein ubiquitination. Has E3 ubiquitin-protein ligase activity. In the absence of an external substrate, it can catalyze self-ubiquitination. Stimulates ubiquitination of potassium channel KCNJ1, enhancing it's dynamin-dependent and clathrin-independent endocytosis. Acts as a scaffold protein that coordinates with MAPK8IP1/JIP1 in organizing different components of the JNK pathway, including RAC1 or RAC2, MAP3K11/MLK3 or MAP3K7/TAK1, MAP2K7/MKK7, MAPK8/JNK1 and/or MAPK9/JNK2 into a functional multiprotein complex to ensure the effective activation of the JNK signaling pathway. Regulates the differentiation of CD4(+) and CD8(+) T-cells and promotes T-helper 1 (Th1) cell differentiation. Regulates the activation of MAPK8/JNK1 and MAPK9/JNK2 in CD4(+) T-cells and the activation of MAPK8/JNK1 in CD8(+) T-cells. Plays a crucial role in the migration of neocortical neurons in the developing brain. Controls proper cortical neuronal migration and the formation of proximal cytoplasmic dilation in the leading process (PCDLP) in migratory neocortical neurons by regulating the proper localization of activated RAC1 and F-actin assembly. In Rattus norvegicus (Rat), this protein is E3 ubiquitin-protein ligase SH3RF1 (Sh3rf1).